Here is a 79-residue protein sequence, read N- to C-terminus: Small proline-rich protein 4 (79 aa).

The segment covering 1–26 has biased composition (low complexity); it reads MSSQQQQRQQQQCPPQRAQQQQVKQP. The tract at residues 1–79 is disordered; that stretch reads MSSQQQQRQQ…AQQASKSKQK (79 aa). The segment covering 66–79 has biased composition (polar residues); the sequence is KCPSAQQASKSKQK.

It belongs to the cornifin (SPRR) family. Post-translationally, cross-linked to membrane proteins by transglutaminase.

Its subcellular location is the cytoplasm. The protein localises to the cell cortex. Cross-linked envelope protein of keratinocytes. Involved in UV-induced cornification. This is Small proline-rich protein 4 (SPRR4) from Homo sapiens (Human).